Here is a 495-residue protein sequence, read N- to C-terminus: ATP synthase subunit beta, chloroplastic (495 aa).

172–179 (GGAGVGKT) contributes to the ATP binding site.

The protein belongs to the ATPase alpha/beta chains family. As to quaternary structure, F-type ATPases have 2 components, CF(1) - the catalytic core - and CF(0) - the membrane proton channel. CF(1) has five subunits: alpha(3), beta(3), gamma(1), delta(1), epsilon(1). CF(0) has four main subunits: a(1), b(1), b'(1) and c(9-12).

Its subcellular location is the plastid. The protein resides in the chloroplast thylakoid membrane. It catalyses the reaction ATP + H2O + 4 H(+)(in) = ADP + phosphate + 5 H(+)(out). In terms of biological role, produces ATP from ADP in the presence of a proton gradient across the membrane. The catalytic sites are hosted primarily by the beta subunits. In Barnardia japonica (Chinese squill), this protein is ATP synthase subunit beta, chloroplastic.